We begin with the raw amino-acid sequence, 343 residues long: 2-deoxy-scyllo-inosamine dehydrogenase (343 aa).

Cys37, His59, Cys91, Cys94, Cys97, Cys105, and Glu146 together coordinate Zn(2+).

This sequence belongs to the zinc-containing alcohol dehydrogenase family. DOIA dehydrogenase subfamily. The cofactor is Zn(2+).

It carries out the reaction 2-deoxy-scyllo-inosamine + NADP(+) = 3-amino-2,3-dideoxy-scyllo-inosose + NADPH + H(+). The catalysed reaction is 2-deoxy-scyllo-inosamine + NAD(+) = 3-amino-2,3-dideoxy-scyllo-inosose + NADH + H(+). Its pathway is metabolic intermediate biosynthesis; 2-deoxystreptamine biosynthesis; 2-deoxystreptamine from D-glucose 6-phosphate: step 3/4. It participates in antibiotic biosynthesis; kanamycin biosynthesis. In terms of biological role, catalyzes the oxidation of 2-deoxy-scyllo-inosamine (DOIA) with NAD(+) or NADP(+), forming 3-amino-2,3-dideoxy-scyllo-inosose (amino-DOI). In Streptomyces kanamyceticus, this protein is 2-deoxy-scyllo-inosamine dehydrogenase (kanE).